Here is a 311-residue protein sequence, read N- to C-terminus: Dihydroorotate dehydrogenase A (fumarate) (311 aa).

FMN-binding positions include Ser-19 and 43–44 (KS). Substrate-binding positions include Lys-43, 67–71 (NSMGL), and Asn-127. Asn-127 is a binding site for FMN. Cys-130 serves as the catalytic Nucleophile. Lys-164 and Val-192 together coordinate FMN. Residue 193-194 (NS) participates in substrate binding. Residues Gly-221, 249–250 (GG), and 271–272 (GT) each bind FMN.

The protein belongs to the dihydroorotate dehydrogenase family. Type 1 subfamily. As to quaternary structure, homodimer. The cofactor is FMN.

The protein resides in the cytoplasm. It catalyses the reaction (S)-dihydroorotate + fumarate = orotate + succinate. The protein operates within pyrimidine metabolism; UMP biosynthesis via de novo pathway. Functionally, catalyzes the conversion of dihydroorotate to orotate with fumarate as the electron acceptor. The polypeptide is Dihydroorotate dehydrogenase A (fumarate) (pyrDA) (Lactococcus lactis subsp. cremoris (Streptococcus cremoris)).